A 33-amino-acid polypeptide reads, in one-letter code: Mu-theraphotoxin-Os1a (33 aa).

Cystine bridges form between cysteine 2-cysteine 17, cysteine 9-cysteine 22, and cysteine 16-cysteine 29. Leucine 33 is subject to Leucine amide.

It belongs to the neurotoxin 10 (Hwtx-1) family. 14 (Hntx-1) subfamily. As to quaternary structure, monomer. In terms of tissue distribution, expressed by the venom gland.

Its subcellular location is the secreted. In terms of biological role, potently and reversibly inhibits some human voltage-gated sodium channels (Nav1.1/SCN1A (IC(50)=72.0 nM), Nav1.2/SCN2A (IC(50)=75.5 nM), Nav1.6/SCN8A (IC(50)=115.0 nM), Nav1.7/SCN9A (IC(50)=52.7-129.5 nM), Nav1.3/SCN3A (IC(50)=306.6 nM)). The hNav1.7/SCN9A channel inhibition occurs without any change in steady-state inactivation- and conductance-voltage relationships. On adult mouse DRG neurons, this toxin is approximately 1000-fold more efficient to inhibit tetrodotoxin (TTX)-sensitive than TTX-resistant sodium currents. In vivo, this toxin exhibits analgesic effects in mice pain models. This Omothymus schioedtei (Malaysian earth tiger tarantula) protein is Mu-theraphotoxin-Os1a.